The primary structure comprises 204 residues: Pyrrolidone-carboxylate peptidase (204 aa).

Active-site residues include E80, C142, and H165.

This sequence belongs to the peptidase C15 family. As to quaternary structure, homotetramer.

Its subcellular location is the cytoplasm. It catalyses the reaction Release of an N-terminal pyroglutamyl group from a polypeptide, the second amino acid generally not being Pro.. In terms of biological role, removes 5-oxoproline from various penultimate amino acid residues except L-proline. The protein is Pyrrolidone-carboxylate peptidase of Lysinibacillus sphaericus (strain C3-41).